Consider the following 274-residue polypeptide: Small ribosomal subunit protein uS2 (274 aa).

The protein belongs to the universal ribosomal protein uS2 family.

This Syntrophobacter fumaroxidans (strain DSM 10017 / MPOB) protein is Small ribosomal subunit protein uS2.